The sequence spans 420 residues: Phosphatidylinositol 5-phosphate 4-kinase type-2 gamma (420 aa).

Ala-2 carries the N-acetylalanine modification. Ser-26 is modified (phosphoserine). One can recognise a PIPK domain in the interval 43 to 419 (AADPLVGVFL…RFLDFISNIF (377 aa)). Residues 69-75 (VMLLPDD) form a required for interaction with PIP5K1A region. Position 349 is a phosphoserine (Ser-349).

Interacts with PIP5K1A; the interaction inhibits PIP5K1A kinase activity. Post-translationally, phosphorylated, phosphorylation is induced by EGF. In terms of tissue distribution, widely expressed, with the most abundant expression in kidney.

It localises to the endoplasmic reticulum. The protein resides in the cytoplasm. The enzyme catalyses a 1,2-diacyl-sn-glycero-3-phospho-(1D-myo-inositol-5-phosphate) + ATP = a 1,2-diacyl-sn-glycero-3-phospho-(1D-myo-inositol-4,5-bisphosphate) + ADP + H(+). It carries out the reaction 1,2-dihexadecanoyl-sn-glycero-3-phospho-(1D-myo-inositol-5-phosphate) + ATP = 1,2-dihexadecanoyl-sn-glycero-3-phospho-(1D-myo-inositol-4,5-bisphosphate) + ADP + H(+). It catalyses the reaction 1,2-dihexadecanoyl-sn-glycero-3-phospho-(1D-myo-inositol-5-phosphate) + GTP = 1,2-dihexadecanoyl-sn-glycero-3-phospho-(1D-myo-inositol-4,5-bisphosphate) + GDP + H(+). In terms of biological role, phosphatidylinositol 5-phosphate 4-kinase with low enzymatic activity. May be a GTP sensor, has higher GTP-dependent kinase activity than ATP-dependent kinase activity. PIP4Ks negatively regulate insulin signaling through a catalytic-independent mechanism. They interact with PIP5Ks and suppress PIP5K-mediated PtdIns(4,5)P2 synthesis and insulin-dependent conversion to PtdIns(3,4,5)P3. This is Phosphatidylinositol 5-phosphate 4-kinase type-2 gamma from Rattus norvegicus (Rat).